Here is a 257-residue protein sequence, read N- to C-terminus: Probable S-adenosylmethionine-dependent methyltransferase MSMEG_2350/MSMEI_2290 (257 aa).

The protein belongs to the methyltransferase superfamily.

Functionally, probable S-adenosylmethionine-dependent methyltransferase required for the 6-O-methylation of the polysaccharide backbone of 6-O-methylglucosyl lipopolysaccharides (MGLP). The polypeptide is Probable S-adenosylmethionine-dependent methyltransferase MSMEG_2350/MSMEI_2290 (Mycolicibacterium smegmatis (strain ATCC 700084 / mc(2)155) (Mycobacterium smegmatis)).